A 351-amino-acid chain; its full sequence is Photosystem II D2 protein (351 aa).

A helical transmembrane segment spans residues 39 to 59 (TAYLAIGGWLTGTTFVTSWYT). Position 116 (histidine 116) interacts with chlorophyll a. A helical transmembrane segment spans residues 123 to 139 (GFMLRQFEIARLVGIRP). Pheophytin a-binding residues include glutamine 128 and asparagine 141. A helical transmembrane segment spans residues 151–164 (VFVSVFLMYPLGQS). Residue histidine 196 participates in chlorophyll a binding. A helical transmembrane segment spans residues 206-226 (GALLCAIHGATVENTLFEDGE). Positions 213 and 260 each coordinate a plastoquinone. Histidine 213 contributes to the Fe cation binding site. Histidine 267 serves as a coordination point for Fe cation. Residues 277-293 (GLWTSSIGIIGLALNLR) traverse the membrane as a helical segment.

This sequence belongs to the reaction center PufL/M/PsbA/D family. PSII is composed of 1 copy each of membrane proteins PsbA, PsbB, PsbC, PsbD, PsbE, PsbF, PsbH, PsbI, PsbJ, PsbK, PsbL, PsbM, PsbT, PsbX, PsbY, PsbZ, Psb30/Ycf12, peripheral proteins PsbO, CyanoQ (PsbQ), PsbU, PsbV and a large number of cofactors. It forms dimeric complexes. Requires The D1/D2 heterodimer binds P680, chlorophylls that are the primary electron donor of PSII, and subsequent electron acceptors. It shares a non-heme iron and each subunit binds pheophytin, quinone, additional chlorophylls, carotenoids and lipids. There is also a Cl(-1) ion associated with D1 and D2, which is required for oxygen evolution. The PSII complex binds additional chlorophylls, carotenoids and specific lipids. as cofactor.

The protein resides in the cellular thylakoid membrane. The catalysed reaction is 2 a plastoquinone + 4 hnu + 2 H2O = 2 a plastoquinol + O2. Photosystem II (PSII) is a light-driven water:plastoquinone oxidoreductase that uses light energy to abstract electrons from H(2)O, generating O(2) and a proton gradient subsequently used for ATP formation. It consists of a core antenna complex that captures photons, and an electron transfer chain that converts photonic excitation into a charge separation. The D1/D2 (PsbA/PsbD) reaction center heterodimer binds P680, the primary electron donor of PSII as well as several subsequent electron acceptors. D2 is needed for assembly of a stable PSII complex. This chain is Photosystem II D2 protein, found in Synechococcus sp. (strain WH7803).